The primary structure comprises 445 residues: Phosphoglucosamine mutase (445 aa).

The active-site Phosphoserine intermediate is Ser102. Residues Ser102, Asp241, Asp243, and Asp245 each contribute to the Mg(2+) site. Phosphoserine is present on Ser102.

The protein belongs to the phosphohexose mutase family. Mg(2+) is required as a cofactor. Post-translationally, activated by phosphorylation.

The enzyme catalyses alpha-D-glucosamine 1-phosphate = D-glucosamine 6-phosphate. In terms of biological role, catalyzes the conversion of glucosamine-6-phosphate to glucosamine-1-phosphate. The chain is Phosphoglucosamine mutase from Escherichia coli O7:K1 (strain IAI39 / ExPEC).